The following is a 235-amino-acid chain: Aspartate/glutamate leucyltransferase (235 aa).

This sequence belongs to the R-transferase family. Bpt subfamily.

The protein localises to the cytoplasm. The enzyme catalyses N-terminal L-glutamyl-[protein] + L-leucyl-tRNA(Leu) = N-terminal L-leucyl-L-glutamyl-[protein] + tRNA(Leu) + H(+). The catalysed reaction is N-terminal L-aspartyl-[protein] + L-leucyl-tRNA(Leu) = N-terminal L-leucyl-L-aspartyl-[protein] + tRNA(Leu) + H(+). Its function is as follows. Functions in the N-end rule pathway of protein degradation where it conjugates Leu from its aminoacyl-tRNA to the N-termini of proteins containing an N-terminal aspartate or glutamate. This chain is Aspartate/glutamate leucyltransferase, found in Pseudomonas syringae pv. syringae (strain B728a).